Here is a 125-residue protein sequence, read N- to C-terminus: MKYLWVALGGALGALARYTVGVWIYERLGTRFPYGTFAINVTGCFLIGLALTVLDAHMDLSPAWRLAIPTGFIGAYTTFSTFEYETLRAAQHGQMGTAVLYFGSSLALGILAVWLGMVVGNRIVA.

A run of 2 helical transmembrane segments spans residues 4–24 and 34–54; these read LWVA…GVWI and YGTF…LTVL. Na(+) contacts are provided by Gly-74 and Thr-77. Residues 99–119 form a helical membrane-spanning segment; sequence VLYFGSSLALGILAVWLGMVV.

The protein belongs to the fluoride channel Fluc/FEX (TC 1.A.43) family.

Its subcellular location is the cell inner membrane. The catalysed reaction is fluoride(in) = fluoride(out). With respect to regulation, na(+) is not transported, but it plays an essential structural role and its presence is essential for fluoride channel function. Functionally, fluoride-specific ion channel. Important for reducing fluoride concentration in the cell, thus reducing its toxicity. The sequence is that of Fluoride-specific ion channel FluC from Acidobacterium capsulatum (strain ATCC 51196 / DSM 11244 / BCRC 80197 / JCM 7670 / NBRC 15755 / NCIMB 13165 / 161).